The sequence spans 760 residues: MKLNVDGLLVYFPYDYIYPEQFSYMLELKRTLDAKGHGVLEMPSGTGKTVSLLALIVAYQRAFPLEVTKLIYCSRTVPEIEKVIEELRKLLSFYEQQEGEKLPFLGLALSSRKNLCIHPEVTPLRFGKDVDGKCHSLTASYVRAQYQQDASLPHCRFYEEFDAHGRQVPLPAGIYNLDDLKALGQRQGWCPYFLARYSILHANVVVYSYHYLLDPKIADLVSKELARKAVVVFDEAHNIDNVCIDSMSVNLTRRTLDRCQSNLDTLQKTVLRIKETDEQRLRDEYRRLVEGLREASAARETDAHLANPVLPDEVLQEAVPGSIRTAEHFLGFLRRLLEYVKWRLRVQHVVQESPPAFLSGLAQRVCIQRKPLRFCAERLRSLLHTLEIADLADFSPLTLLANFATLVSTYAKGFTIIIEPFDDRTPTIANPILHFSCMDASLAIKPVFERFQSVIITSGTLSPLDIYPKILDFHPVTMATFTMTLARVCLCPMIIGRGNDQVAISSKFETREDIAVIRNYGNLLLEMSAVVPDGIVAFFTSYQYMESTVASWYEQGILENIQRNKLLFIETQDGAETSVALEKYQEACENGRGAILLSVARGKVSEGIDFVHHYGRAVIMFGVPYVYTQSRILKARLEYLRDQFQIRENDFLTFDAMRHAAQCVGRAIRGKTDYGLMVFADKRFARADKRGKLPRWIQEHLTDSNLNLTVDEGVQVAKYFLRQMAQPFHREDQLGLSLLSLEQLQSEETLRRVEQIAQQL.

The 277-residue stretch at 7–283 (GLLVYFPYDY…KETDEQRLRD (277 aa)) folds into the Helicase ATP-binding domain. Position 42-49 (42-49 (MPSGTGKT)) interacts with ATP. Residues cysteine 116, cysteine 134, cysteine 155, and cysteine 190 each contribute to the [4Fe-4S] cluster site. Residues 234–237 (DEAH) carry the DEAH box motif. The tract at residues 438-637 (MDASLAIKPV…TQSRILKARL (200 aa)) is mediates interaction with MMS19. A Nuclear localization signal motif is present at residues 682 to 695 (KRFARADKRGKLPR).

The protein belongs to the helicase family. RAD3/XPD subfamily. As to quaternary structure, component of the 7-subunit TFIIH core complex composed of XPB/ERCC3, XPD/ERCC2, GTF2H1, GTF2H2, GTF2H3, GTF2H4 and GTF2H5, which is active in NER. The core complex associates with the 3-subunit CDK-activating kinase (CAK) module composed of CCNH/cyclin H, CDK7 and MNAT1 to form the 10-subunit holoenzyme (holo-TFIIH) active in transcription. The interaction with GTF2H2 results in the stimulation of the 5'--&gt;3' helicase activity. Component of the MMXD complex, which includes CIAO1, ERCC2, CIAO2B, MMS19 and SLC25A5. Interacts with CIAO1 and CIAO2B; the interaction WITH CIAO2B is direct. Interacts with ATF7IP. Interacts directly with MMS19. Part of TBP-based Pol II pre-initiation complex (PIC), in which Pol II core assembles with general transcription factors and other specific initiation factors including GTF2E1, GTF2E2, GTF2F1, GTF2F2, TCEA1, ERCC2, ERCC3, GTF2H2, GTF2H3, GTF2H4, GTF2H5, GTF2A1, GTF2A2, GTF2B and TBP; this large multi-subunit PIC complex mediates DNA unwinding and targets Pol II core to the transcription start site where the first phosphodiester bond forms. Mg(2+) is required as a cofactor. The cofactor is [4Fe-4S] cluster. Post-translationally, ISGylated.

The protein localises to the nucleus. The protein resides in the cytoplasm. It is found in the cytoskeleton. It localises to the spindle. It carries out the reaction Couples ATP hydrolysis with the unwinding of duplex DNA at the replication fork by translocating in the 5'-3' direction. This creates two antiparallel DNA single strands (ssDNA). The leading ssDNA polymer is the template for DNA polymerase III holoenzyme which synthesizes a continuous strand.. The catalysed reaction is ATP + H2O = ADP + phosphate + H(+). Its function is as follows. ATP-dependent 5'-3' DNA helicase. Component of the general transcription and DNA repair factor IIH (TFIIH) core complex which is involved in general and transcription-coupled nucleotide excision repair (NER) of damaged DNA. When complexed to CDK-activating kinase (CAK), involved in transcription by RNA polymerase II. In NER, TFIIH acts by opening DNA around the lesion to allow the excision of the damaged oligonucleotide and its replacement by a new DNA fragment. The ATP-dependent helicase activity of XPD/ERCC2 is required for DNA opening. In transcription, TFIIH has an essential role in transcription initiation. When the pre-initiation complex (PIC) has been established, TFIIH is required for promoter opening and promoter escape. Phosphorylation of the C-terminal tail (CTD) of the largest subunit of RNA polymerase II by the kinase module CAK controls the initiation of transcription. XPD/ERCC2 acts by forming a bridge between CAK and the core-TFIIH complex. Involved in the regulation of vitamin-D receptor activity. As part of the mitotic spindle-associated MMXD complex it plays a role in chromosome segregation. Might have a role in aging process and could play a causative role in the generation of skin cancers. This is General transcription and DNA repair factor IIH helicase subunit XPD from Cricetulus griseus (Chinese hamster).